We begin with the raw amino-acid sequence, 270 residues long: Putative pyruvate, phosphate dikinase regulatory protein 1 (270 aa).

151–158 (GVSRTSKT) serves as a coordination point for ADP.

This sequence belongs to the pyruvate, phosphate/water dikinase regulatory protein family. PDRP subfamily.

The enzyme catalyses N(tele)-phospho-L-histidyl/L-threonyl-[pyruvate, phosphate dikinase] + ADP = N(tele)-phospho-L-histidyl/O-phospho-L-threonyl-[pyruvate, phosphate dikinase] + AMP + H(+). The catalysed reaction is N(tele)-phospho-L-histidyl/O-phospho-L-threonyl-[pyruvate, phosphate dikinase] + phosphate + H(+) = N(tele)-phospho-L-histidyl/L-threonyl-[pyruvate, phosphate dikinase] + diphosphate. In terms of biological role, bifunctional serine/threonine kinase and phosphorylase involved in the regulation of the pyruvate, phosphate dikinase (PPDK) by catalyzing its phosphorylation/dephosphorylation. This is Putative pyruvate, phosphate dikinase regulatory protein 1 from Enterococcus faecalis (strain ATCC 700802 / V583).